A 445-amino-acid polypeptide reads, in one-letter code: Acyl-lipid (7-3)-desaturase (445 aa).

Positions 11-91 (VAELRAAEVA…MSKFFVGSLD (81 aa)) constitute a Cytochrome b5 heme-binding domain. Residues histidine 50 and histidine 73 each contribute to the heme site. Transmembrane regions (helical) follow at residues 126–146 (YWLK…YMLL) and 148–168 (GKTL…GLNI). The Histidine box-1 signature appears at 170–174 (HDANH). The Histidine box-2 signature appears at 205-210 (HVVMHH). A run of 3 helical transmembrane segments spans residues 247-267 (ILPG…LELL), 283-303 (LFAP…ALPL), and 312-332 (ALCI…FFFI). Positions 380-384 (QIEHH) match the Histidine box-3 motif.

It belongs to the fatty acid desaturase type 1 family. Fe(2+) serves as cofactor.

It is found in the membrane. It carries out the reaction a (7Z,10Z,13Z,16Z,19Z)-docosapentaenoyl-containing glycerolipid + 2 Fe(II)-[cytochrome b5] + O2 + 2 H(+) = a (4Z,7Z,10Z,13Z,16Z,19Z)-docosahexaenoyl-containing glycerolipid + 2 Fe(III)-[cytochrome b5] + 2 H2O. The catalysed reaction is a (7Z,10Z,13Z,16Z)-docosatetraenoyl-containing glycerolipid + 2 Fe(II)-[cytochrome b5] + O2 + 2 H(+) = a (4Z,7Z,10Z,13Z,16Z)-docosapentaenoyl-containing glycerolipid + 2 Fe(III)-[cytochrome b5] + 2 H2O. Fatty acid desaturase that introduces a cis double bond at the 4-position in 22-carbon polyunsaturated fatty acids that contain a Delta(7) double bond, resulting in the production of delta-4 desaturated fatty acid docosahexanoic acid (DHA). Mediates desaturation of 22:5n-3 and 22:4n-6 into 22:6n-3 and 22:5n-6 respectively. This is Acyl-lipid (7-3)-desaturase from Diacronema lutheri (Unicellular marine alga).